The sequence spans 279 residues: Pantothenate synthetase (279 aa).

26–33 is a binding site for ATP; sequence MGNLHDGH. The Proton donor role is filled by His33. A (R)-pantoate-binding site is contributed by Gln57. Gln57 serves as a coordination point for beta-alanine. 144-147 contacts ATP; the sequence is GKKD. Gln150 contacts (R)-pantoate. An ATP-binding site is contributed by 181-184; that stretch reads LSSR.

The protein belongs to the pantothenate synthetase family. As to quaternary structure, homodimer.

The protein resides in the cytoplasm. The enzyme catalyses (R)-pantoate + beta-alanine + ATP = (R)-pantothenate + AMP + diphosphate + H(+). Its pathway is cofactor biosynthesis; (R)-pantothenate biosynthesis; (R)-pantothenate from (R)-pantoate and beta-alanine: step 1/1. In terms of biological role, catalyzes the condensation of pantoate with beta-alanine in an ATP-dependent reaction via a pantoyl-adenylate intermediate. The chain is Pantothenate synthetase from Herminiimonas arsenicoxydans.